Consider the following 631-residue polypeptide: Phosphomethylpyrimidine synthase (631 aa).

Substrate contacts are provided by residues N239, M268, Y297, H333, 353-355 (SRG), 394-397 (DGLR), and E433. H437 lines the Zn(2+) pocket. Y460 is a substrate binding site. Position 501 (H501) interacts with Zn(2+). [4Fe-4S] cluster-binding residues include C581, C584, and C589.

This sequence belongs to the ThiC family. Homodimer. Requires [4Fe-4S] cluster as cofactor.

The catalysed reaction is 5-amino-1-(5-phospho-beta-D-ribosyl)imidazole + S-adenosyl-L-methionine = 4-amino-2-methyl-5-(phosphooxymethyl)pyrimidine + CO + 5'-deoxyadenosine + formate + L-methionine + 3 H(+). It functions in the pathway cofactor biosynthesis; thiamine diphosphate biosynthesis. In terms of biological role, catalyzes the synthesis of the hydroxymethylpyrimidine phosphate (HMP-P) moiety of thiamine from aminoimidazole ribotide (AIR) in a radical S-adenosyl-L-methionine (SAM)-dependent reaction. This Escherichia coli O6:K15:H31 (strain 536 / UPEC) protein is Phosphomethylpyrimidine synthase.